The primary structure comprises 43 residues: Protein PsbN (43 aa).

The helical transmembrane segment at Gly4–Tyr24 threads the bilayer.

Belongs to the PsbN family.

The protein localises to the plastid. It localises to the chloroplast thylakoid membrane. May play a role in photosystem I and II biogenesis. The protein is Protein PsbN of Chaetosphaeridium globosum (Charophycean green alga).